We begin with the raw amino-acid sequence, 409 residues long: Peptidase T (409 aa).

Histidine 78 serves as a coordination point for Zn(2+). Aspartate 80 is an active-site residue. Aspartate 140 contacts Zn(2+). Glutamate 173 serves as the catalytic Proton acceptor. 3 residues coordinate Zn(2+): glutamate 174, aspartate 196, and histidine 379.

It belongs to the peptidase M20B family. Requires Zn(2+) as cofactor.

The protein localises to the cytoplasm. The enzyme catalyses Release of the N-terminal residue from a tripeptide.. Functionally, cleaves the N-terminal amino acid of tripeptides. The chain is Peptidase T from Escherichia coli (strain SE11).